A 250-amino-acid chain; its full sequence is 5-oxoprolinase subunit A (250 aa).

It belongs to the LamB/PxpA family. Forms a complex composed of PxpA, PxpB and PxpC.

It carries out the reaction 5-oxo-L-proline + ATP + 2 H2O = L-glutamate + ADP + phosphate + H(+). In terms of biological role, catalyzes the cleavage of 5-oxoproline to form L-glutamate coupled to the hydrolysis of ATP to ADP and inorganic phosphate. In Pseudomonas fluorescens (strain Pf0-1), this protein is 5-oxoprolinase subunit A.